The sequence spans 289 residues: Homoserine kinase (289 aa).

79–89 (PLARGLGSSSS) serves as a coordination point for ATP.

Belongs to the GHMP kinase family. Homoserine kinase subfamily.

It is found in the cytoplasm. The enzyme catalyses L-homoserine + ATP = O-phospho-L-homoserine + ADP + H(+). It functions in the pathway amino-acid biosynthesis; L-threonine biosynthesis; L-threonine from L-aspartate: step 4/5. In terms of biological role, catalyzes the ATP-dependent phosphorylation of L-homoserine to L-homoserine phosphate. The chain is Homoserine kinase from Streptococcus pneumoniae (strain Taiwan19F-14).